A 95-amino-acid polypeptide reads, in one-letter code: Mammaglobin-B (95 aa).

The N-terminal stretch at 1 to 18 (MKLLMVLMLAALLLHCYA) is a signal peptide. A glycan (N-linked (GlcNAc...) asparagine) is linked at Asn68.

In terms of assembly, heterodimer of a lipophilin A and a lipophilin C (mammaglobin B) monomer associated head to head. In terms of tissue distribution, expressed in thymus, trachea, kidney, steroid responsive tissues (prostate, testis, uterus, breast and ovary) and salivary gland.

Its subcellular location is the secreted. Its function is as follows. May bind androgens and other steroids, may also bind estramustine, a chemotherapeutic agent used for prostate cancer. May be under transcriptional regulation of steroid hormones. In Homo sapiens (Human), this protein is Mammaglobin-B (SCGB2A1).